The following is a 158-amino-acid chain: 6,7-dimethyl-8-ribityllumazine synthase (158 aa).

5-amino-6-(D-ribitylamino)uracil-binding positions include Phe-24, 58-60 (AFE), and 82-84 (AVI). 87 to 88 (GT) provides a ligand contact to (2S)-2-hydroxy-3-oxobutyl phosphate. Catalysis depends on His-90, which acts as the Proton donor. Position 115 (Phe-115) interacts with 5-amino-6-(D-ribitylamino)uracil. Residue Arg-129 coordinates (2S)-2-hydroxy-3-oxobutyl phosphate.

It belongs to the DMRL synthase family. Forms an icosahedral capsid composed of 60 subunits, arranged as a dodecamer of pentamers.

The catalysed reaction is (2S)-2-hydroxy-3-oxobutyl phosphate + 5-amino-6-(D-ribitylamino)uracil = 6,7-dimethyl-8-(1-D-ribityl)lumazine + phosphate + 2 H2O + H(+). The protein operates within cofactor biosynthesis; riboflavin biosynthesis; riboflavin from 2-hydroxy-3-oxobutyl phosphate and 5-amino-6-(D-ribitylamino)uracil: step 1/2. In terms of biological role, catalyzes the formation of 6,7-dimethyl-8-ribityllumazine by condensation of 5-amino-6-(D-ribitylamino)uracil with 3,4-dihydroxy-2-butanone 4-phosphate. This is the penultimate step in the biosynthesis of riboflavin. The protein is 6,7-dimethyl-8-ribityllumazine synthase of Pseudomonas putida (strain GB-1).